Reading from the N-terminus, the 271-residue chain is Orotidine 5'-phosphate decarboxylase (271 aa).

The active-site Proton donor is the Lys97.

The protein belongs to the OMP decarboxylase family. Type 2 subfamily.

It catalyses the reaction orotidine 5'-phosphate + H(+) = UMP + CO2. The protein operates within pyrimidine metabolism; UMP biosynthesis via de novo pathway; UMP from orotate: step 2/2. This chain is Orotidine 5'-phosphate decarboxylase, found in Leptospira borgpetersenii serovar Hardjo-bovis (strain JB197).